Here is a 286-residue protein sequence, read N- to C-terminus: Elongation factor Ts (286 aa).

The interval 82 to 85 is involved in Mg(2+) ion dislocation from EF-Tu; that stretch reads TDFV.

This sequence belongs to the EF-Ts family.

It localises to the cytoplasm. In terms of biological role, associates with the EF-Tu.GDP complex and induces the exchange of GDP to GTP. It remains bound to the aminoacyl-tRNA.EF-Tu.GTP complex up to the GTP hydrolysis stage on the ribosome. This Hamiltonella defensa subsp. Acyrthosiphon pisum (strain 5AT) protein is Elongation factor Ts.